A 60-amino-acid polypeptide reads, in one-letter code: UPF0434 protein Vapar_2640 (60 aa).

It belongs to the UPF0434 family.

This Variovorax paradoxus (strain S110) protein is UPF0434 protein Vapar_2640.